Here is a 458-residue protein sequence, read N- to C-terminus: tRNA modification GTPase MnmE (458 aa).

The (6S)-5-formyl-5,6,7,8-tetrahydrofolate site is built by arginine 26, glutamate 88, and arginine 127. The TrmE-type G domain maps to 224 to 378 (GLSTAIIGRP…IEDRINQLFF (155 aa)). Asparagine 234 contacts K(+). GTP is bound by residues 234–239 (NVGKSS), 253–259 (TDIAGTT), and 278–281 (DTAG). Position 238 (serine 238) interacts with Mg(2+). K(+) is bound by residues threonine 253, isoleucine 255, and threonine 258. Threonine 259 contributes to the Mg(2+) binding site. Position 458 (lysine 458) interacts with (6S)-5-formyl-5,6,7,8-tetrahydrofolate.

It belongs to the TRAFAC class TrmE-Era-EngA-EngB-Septin-like GTPase superfamily. TrmE GTPase family. As to quaternary structure, homodimer. Heterotetramer of two MnmE and two MnmG subunits. K(+) serves as cofactor.

Its subcellular location is the cytoplasm. Functionally, exhibits a very high intrinsic GTPase hydrolysis rate. Involved in the addition of a carboxymethylaminomethyl (cmnm) group at the wobble position (U34) of certain tRNAs, forming tRNA-cmnm(5)s(2)U34. In Streptococcus pyogenes serotype M28 (strain MGAS6180), this protein is tRNA modification GTPase MnmE.